We begin with the raw amino-acid sequence, 429 residues long: MQIHTSKPAKTVRGEITVPGDKSISHRSIMLGSLARGITTVKGFLRGEDNLATLNAFRAMGIIVHDDGETLKIEGNGLHGLGEPADVLDCGNSGTSMRLMTGLLSGQRFFSVLTGDQYLRKRPMKRVLEPLNLMGATVFGRAGGDKAPLAIVGTSLKGIAYQSPVSSAQVKSAILLAGMYADGETQVTEPHLSRDHSERILRYFGADIETYSGGTRIRGGRELEGREIIVPGDISSAAFFMVAALIVPGSELLIKGVGVNPTRTGIIDILQAMGGDITLQNCRESSGEPVADILVKSSRLKGIEVGGDLVPRAIDEFPVICVAASLAEGKTVIRDAKELRVKETDRIKAMAFNLQKAGVAVVETENGMDVTGMEKLEGCTAESFGDHRIAMSMLIAGLAARDQITVNDTECIGTSFPNFTALLQGVTVI.

Lys-22, Ser-23, and Arg-27 together coordinate 3-phosphoshikimate. Residue Lys-22 participates in phosphoenolpyruvate binding. 2 residues coordinate phosphoenolpyruvate: Gly-94 and Arg-122. 3-phosphoshikimate contacts are provided by Ser-167, Gln-169, Asp-315, and Lys-342. Phosphoenolpyruvate is bound at residue Gln-169. Asp-315 serves as the catalytic Proton acceptor. Phosphoenolpyruvate contacts are provided by Arg-346 and Arg-388.

This sequence belongs to the EPSP synthase family. Monomer.

It is found in the cytoplasm. It carries out the reaction 3-phosphoshikimate + phosphoenolpyruvate = 5-O-(1-carboxyvinyl)-3-phosphoshikimate + phosphate. The protein operates within metabolic intermediate biosynthesis; chorismate biosynthesis; chorismate from D-erythrose 4-phosphate and phosphoenolpyruvate: step 6/7. Catalyzes the transfer of the enolpyruvyl moiety of phosphoenolpyruvate (PEP) to the 5-hydroxyl of shikimate-3-phosphate (S3P) to produce enolpyruvyl shikimate-3-phosphate and inorganic phosphate. This Geotalea daltonii (strain DSM 22248 / JCM 15807 / FRC-32) (Geobacter daltonii) protein is 3-phosphoshikimate 1-carboxyvinyltransferase.